Reading from the N-terminus, the 370-residue chain is Pantothenate kinase 3 (370 aa).

E138 functions as the Proton acceptor in the catalytic mechanism. Residues S192, S195, and R207 each contribute to the acetyl-CoA site.

Belongs to the type II pantothenate kinase family. Homodimer. As to expression, highly expressed in the liver.

Its subcellular location is the cytoplasm. The catalysed reaction is (R)-pantothenate + ATP = (R)-4'-phosphopantothenate + ADP + H(+). It functions in the pathway cofactor biosynthesis; coenzyme A biosynthesis; CoA from (R)-pantothenate: step 1/5. With respect to regulation, subject to allosteric regulation, exists in two distinct conformational states, a catalytically incompetent (or open) conformation stabilized by the binding of acetyl(acyl)-CoA, and a catalytically competent (or closed) conformation stabilized by ATP-binding. Acetyl-CoA and its thioesters act as allosteric inhibitors and compete with the ATP-binding site. Strongly inhibited by acetyl-CoA, malonyl-CoA and palmitoyl CoA and modestly inhibited by CoA. Inhibited by calcium hopantenate. Its function is as follows. Catalyzes the phosphorylation of pantothenate to generate 4'-phosphopantothenate in the first and rate-determining step of coenzyme A (CoA) synthesis. This chain is Pantothenate kinase 3 (Pank3), found in Mus musculus (Mouse).